The sequence spans 819 residues: DNA topoisomerase 4 subunit A (819 aa).

In terms of domain architecture, Topo IIA-type catalytic spans Leu30 to Leu496. Tyr118 serves as the catalytic O-(5'-phospho-DNA)-tyrosine intermediate.

The protein belongs to the type II topoisomerase GyrA/ParC subunit family. ParC type 2 subfamily. As to quaternary structure, heterotetramer composed of ParC and ParE.

The protein localises to the cell membrane. The catalysed reaction is ATP-dependent breakage, passage and rejoining of double-stranded DNA.. In terms of biological role, topoisomerase IV is essential for chromosome segregation. It relaxes supercoiled DNA. Performs the decatenation events required during the replication of a circular DNA molecule. This Streptococcus pyogenes serotype M18 (strain MGAS8232) protein is DNA topoisomerase 4 subunit A.